The sequence spans 1536 residues: Glycogen debranching enzyme (1536 aa).

Active-site residues include D535, H538, and D670.

This sequence belongs to the glycogen debranching enzyme family. Interacts with IGD1.

It is found in the mitochondrion. The protein resides in the cytoplasm. It catalyses the reaction Transfers a segment of a (1-&gt;4)-alpha-D-glucan to a new position in an acceptor, which may be glucose or a (1-&gt;4)-alpha-D-glucan.. The catalysed reaction is Hydrolysis of (1-&gt;6)-alpha-D-glucosidic branch linkages in glycogen phosphorylase limit dextrin.. Its activity is regulated as follows. Activity is inhibited by IGD1. Functionally, multifunctional enzyme acting as 1,4-alpha-D-glucan:1,4-alpha-D-glucan 4-alpha-D-glycosyltransferase and amylo-1,6-glucosidase in glycogen degradation. The sequence is that of Glycogen debranching enzyme (GDB1) from Saccharomyces cerevisiae (strain ATCC 204508 / S288c) (Baker's yeast).